A 134-amino-acid polypeptide reads, in one-letter code: Thioredoxin-like protein Clot (134 aa).

The region spanning 1–134 is the Thioredoxin domain; the sequence is MTLKKVDANP…LILPLLAPST (134 aa). Active-site nucleophile residues include C48 and C51. C48 and C51 form a disulfide bridge.

It belongs to the thioredoxin family.

Probable thiol-disulfide oxidoreductase that may participate in various redox reactions. This Arabidopsis thaliana (Mouse-ear cress) protein is Thioredoxin-like protein Clot.